Consider the following 268-residue polypeptide: MRQEDRRTGVVARKLGMTRIFAEDGSHVPCTVLHMDNVQVVSHKTADRDGYVALQLGAGEAKAKRTPKAMRGHFAKAKVAPKRKLVEFRVAEDALIEVGSELTADHFVPGQKVDVAGISIGKGFAGAMKRHGFGGLRATHGVSISHRSHGSTGQCQDPGKVFKGKKMAGHMGAVRVTTQNIEVVRVDVERGIVLVKGAVPGSAGGWVELRDAIKGHGGTELPLPGKFRTLDELNAPVTAEVVENEAAPADADNAAPEAAADGEEGTQA.

An N5-methylglutamine modification is found at Gln-156. A compositionally biased stretch (low complexity) spans 242–259 (VENEAAPADADNAAPEAA). Residues 242-268 (VENEAAPADADNAAPEAAADGEEGTQA) form a disordered region.

This sequence belongs to the universal ribosomal protein uL3 family. In terms of assembly, part of the 50S ribosomal subunit. Forms a cluster with proteins L14 and L19. Methylated by PrmB.

Its function is as follows. One of the primary rRNA binding proteins, it binds directly near the 3'-end of the 23S rRNA, where it nucleates assembly of the 50S subunit. This Maricaulis maris (strain MCS10) (Caulobacter maris) protein is Large ribosomal subunit protein uL3.